The primary structure comprises 231 residues: MKTLEKKLAEDFKIVFSDKELLETAFTHTSYANEHRLLNISHNERLEFLGDAVLQLTISHYLFDKYPQKAEGDLSKMRSMIVREESLAGFSRNCHFDRYIKLGKGEEKSGGRQRDTILGDLFEAFLGALLLDAGLKAVEAFLNQVVIPKVENNNYERVTDYKTALQELLQVDGDVLIDYEVLKESGPAHAKCFEVAVSMNHEKLSSGTGKSKKLAEQEAAKNALEKLQRGS.

One can recognise an RNase III domain in the interval 1 to 134 (MKTLEKKLAE…FLGALLLDAG (134 aa)). Glutamate 47 serves as a coordination point for Mg(2+). Aspartate 51 is a catalytic residue. The Mg(2+) site is built by aspartate 120 and glutamate 123. Glutamate 123 is an active-site residue. The DRBM domain maps to 160–229 (DYKTALQELL…AKNALEKLQR (70 aa)).

The protein belongs to the ribonuclease III family. In terms of assembly, homodimer. Mg(2+) serves as cofactor.

Its subcellular location is the cytoplasm. The catalysed reaction is Endonucleolytic cleavage to 5'-phosphomonoester.. Its function is as follows. Digests double-stranded RNA. Involved in the processing of primary rRNA transcript to yield the immediate precursors to the large and small rRNAs (23S and 16S). Also processes some mRNAs, and tRNAs when they are encoded in the rRNA operon. Functionally, CRISPR (clustered regularly interspaced short palindromic repeat) is an adaptive immune system that provides protection against mobile genetic elements (viruses, transposable elements and conjugative plasmids). CRISPR clusters contain spacers, sequences complementary to antecedent mobile elements, and target invading nucleic acids. CRISPR clusters are transcribed and processed into CRISPR RNA (crRNA). In this organism endogenous ribonuclease 3 and Cas9 are required for correct coprocessing of pre-crRNA and the trans-encoded small RNA (tracrRNA). Cas9, crRNA and tracrRNA are required for cleavage of invading DNA. Complements pre-crRNA and tracrRNA coprocessing defects in an rnc deletion in S.pyogenes strain 370. This is Ribonuclease 3 from Streptococcus mutans serotype c (strain ATCC 700610 / UA159).